A 340-amino-acid chain; its full sequence is Outer membrane protein B (340 aa).

Residues 1–26 (MSSKLVNSLRLTFLSFLGIVSTSLDA) form the signal peptide.

The protein belongs to the chlamydial OMP family.

It localises to the cell outer membrane. This Chlamydia muridarum (strain MoPn / Nigg) protein is Outer membrane protein B (ompB).